The primary structure comprises 146 residues: VHWTAEEKSAITSIWNKVDVPAVGSEALSRLLIVYPWTQRFFTSFGNLSNAAAIQSNAQVKAHGKKVFTAFGDAVKNPEAVKETFAKLSELHCDKLHVDPINFKLLGQILITVLAAHFGKEFTPHVQASYQKLVSVVAHALAHRYH.

One can recognise a Globin domain in the interval 2 to 146; that stretch reads HWTAEEKSAI…VAHALAHRYH (145 aa). Residues His63 and His92 each coordinate heme b.

This sequence belongs to the globin family. In terms of assembly, heterotetramer of two alpha chains and two beta chains. In terms of tissue distribution, red blood cells.

Its function is as follows. Involved in oxygen transport from the lung to the various peripheral tissues. The protein is Hemoglobin subunit beta-1 of Drymarchon melanurus erebennus (Texas indigo snake).